The sequence spans 514 residues: Variant surface glycoprotein ILTAT 1.24 (514 aa).

Residues 1-23 (MVYRNILQLSVLKVLLIVLIVEA) form the signal peptide. Cystine bridges form between C37-C162 and C143-C204. N-linked (GlcNAc...) asparagine glycosylation occurs at N443. Residues 451–476 (GVPVTQTQTAGADTTAEKCKGKGEKD) form a disordered region. The segment covering 455–464 (TQTQTAGADT) has biased composition (low complexity). Basic and acidic residues predominate over residues 465 to 476 (TAEKCKGKGEKD). D491 carries the GPI-anchor amidated aspartate lipid modification. A propeptide spans 492–514 (SSILANKQFALSVASAAFVALLF) (removed in mature form).

It is found in the cell membrane. Functionally, VSG forms a coat on the surface of the parasite. The trypanosome evades the immune response of the host by expressing a series of antigenically distinct VSGs from an estimated 1000 VSG genes. This Trypanosoma brucei brucei protein is Variant surface glycoprotein ILTAT 1.24.